The sequence spans 319 residues: Ornithine carbamoyltransferase (319 aa).

Carbamoyl phosphate-binding positions include 57 to 60 (STRT), Gln84, Arg108, and 135 to 138 (HPCQ). L-ornithine contacts are provided by residues Asn166, Asp230, and 234 to 235 (SM). Carbamoyl phosphate-binding positions include 270–271 (CL) and Arg298.

The protein belongs to the aspartate/ornithine carbamoyltransferase superfamily. OTCase family.

It localises to the cytoplasm. The enzyme catalyses carbamoyl phosphate + L-ornithine = L-citrulline + phosphate + H(+). It participates in amino-acid biosynthesis; L-arginine biosynthesis; L-arginine from L-ornithine and carbamoyl phosphate: step 1/3. Functionally, reversibly catalyzes the transfer of the carbamoyl group from carbamoyl phosphate (CP) to the N(epsilon) atom of ornithine (ORN) to produce L-citrulline. This is Ornithine carbamoyltransferase (argF) from Bacillus subtilis (strain 168).